Reading from the N-terminus, the 464-residue chain is UNC93-like protein 3 (464 aa).

The next 11 helical transmembrane spans lie at 31-51, 62-82, 84-104, 110-130, 160-180, 192-212, 251-271, 275-295, 313-333, 341-361, and 392-412; these read VHIL…AQNL, ISLG…SLVV, LMGS…FVAA, WFTM…IWVG, EFWA…LALL, TLLM…MFFI, LLIV…WAEF, IVTP…YGAL, ITFI…WLLL, VLGT…DGIL, and IAIV…IVML.

This sequence belongs to the unc-93 family.

It localises to the membrane. The protein is UNC93-like protein 3 of Arabidopsis thaliana (Mouse-ear cress).